The primary structure comprises 104 residues: NADH-quinone oxidoreductase subunit K (104 aa).

3 helical membrane passes run Val-4 to Ala-24, Val-31 to Phe-51, and Leu-67 to Leu-87.

It belongs to the complex I subunit 4L family. In terms of assembly, NDH-1 is composed of 14 different subunits. Subunits NuoA, H, J, K, L, M, N constitute the membrane sector of the complex.

The protein localises to the cell membrane. The enzyme catalyses a quinone + NADH + 5 H(+)(in) = a quinol + NAD(+) + 4 H(+)(out). NDH-1 shuttles electrons from NADH, via FMN and iron-sulfur (Fe-S) centers, to quinones in the respiratory chain. The immediate electron acceptor for the enzyme in this species is believed to be a menaquinone. Couples the redox reaction to proton translocation (for every two electrons transferred, four hydrogen ions are translocated across the cytoplasmic membrane), and thus conserves the redox energy in a proton gradient. The protein is NADH-quinone oxidoreductase subunit K of Bacillus cereus (strain G9842).